A 613-amino-acid polypeptide reads, in one-letter code: Probable Xaa-Pro aminopeptidase P (613 aa).

Asp408, Asp419, Glu517, and Glu531 together coordinate Mn(2+).

The protein belongs to the peptidase M24B family. It depends on Mn(2+) as a cofactor.

It catalyses the reaction Release of any N-terminal amino acid, including proline, that is linked to proline, even from a dipeptide or tripeptide.. Catalyzes the removal of a penultimate prolyl residue from the N-termini of peptides. In Penicillium rubens (strain ATCC 28089 / DSM 1075 / NRRL 1951 / Wisconsin 54-1255) (Penicillium chrysogenum), this protein is Probable Xaa-Pro aminopeptidase P (ampp).